A 338-amino-acid polypeptide reads, in one-letter code: Glyceraldehyde-3-phosphate dehydrogenase, cytosolic (338 aa).

Residues 13–14, Asp-35, and Arg-82 contribute to the NAD(+) site; that span reads RI. Residues 153–155, Thr-184, 213–214, and Arg-236 each bind D-glyceraldehyde 3-phosphate; these read SCT and TG. Catalysis depends on Cys-154, which acts as the Nucleophile. Asn-318 provides a ligand contact to NAD(+).

This sequence belongs to the glyceraldehyde-3-phosphate dehydrogenase family. As to quaternary structure, homotetramer.

The protein resides in the cytoplasm. It carries out the reaction D-glyceraldehyde 3-phosphate + phosphate + NAD(+) = (2R)-3-phospho-glyceroyl phosphate + NADH + H(+). Its pathway is carbohydrate degradation; glycolysis; pyruvate from D-glyceraldehyde 3-phosphate: step 1/5. Functionally, key enzyme in glycolysis that catalyzes the first step of the pathway by converting D-glyceraldehyde 3-phosphate (G3P) into 3-phospho-D-glyceroyl phosphate. Essential for the maintenance of cellular ATP levels and carbohydrate metabolism. The sequence is that of Glyceraldehyde-3-phosphate dehydrogenase, cytosolic (GAPC) from Dianthus caryophyllus (Carnation).